The sequence spans 838 residues: Calmodulin-binding transcription activator 6 (838 aa).

Positions 25-134 (VQTMLEEAKS…YRDTQEAATT (110 aa)) form a DNA-binding region, CG-1. One copy of the ANK repeat lies at 525–554 (QGWTALHWAAYYGREKMVAALLSAGARPNL). 3 IQ domains span residues 671 to 700 (SIIA…IQCR), 713 to 742 (MRRQ…SVGV), and 788 to 817 (LERS…THEE). A calmodulin-binding region spans residues 738–760 (WSVGVLEKAVLRWRQKRKGFRGL). A coiled-coil region spans residues 802–822 (KKAQQDYRRMKLTHEEAQVNH).

The protein belongs to the CAMTA family. Expressed in roots, stems, leaves, sepals, petals, stamen filaments, top of carpels, anthers and siliques, but not in stigmas.

It localises to the nucleus. Its function is as follows. Transcription activator that binds calmodulin in a calcium-dependent manner in vitro. Binds to the DNA consensus sequence 5'-[ACG]CGCG[GTC]-3'. Regulates transcriptional activity in response to calcium signals. This Arabidopsis thaliana (Mouse-ear cress) protein is Calmodulin-binding transcription activator 6.